We begin with the raw amino-acid sequence, 633 residues long: Extracellular metalloproteinase 5 (633 aa).

The signal sequence occupies residues 1–21 (MHGLLLAAAGLLSLPLHVVAH). A propeptide spanning residues 22–245 (PQPSTSLAGR…HNVVDYVSHA (224 aa)) is cleaved from the precursor. Asn285 carries an N-linked (GlcNAc...) asparagine glycan. Position 428 (His428) interacts with Zn(2+). The active site involves Glu429. His432 contacts Zn(2+). 2 N-linked (GlcNAc...) asparagine glycosylation sites follow: Asn592 and Asn621.

It belongs to the peptidase M36 family. Zn(2+) serves as cofactor.

It localises to the secreted. In terms of biological role, secreted metalloproteinase probably acting as a virulence factor. In Trichophyton rubrum (Athlete's foot fungus), this protein is Extracellular metalloproteinase 5 (MEP5).